A 388-amino-acid polypeptide reads, in one-letter code: Succinate--CoA ligase [ADP-forming] subunit beta (388 aa).

One can recognise an ATP-grasp domain in the interval 9–244; that stretch reads KALFAEYGLP…PSQDDAREAH (236 aa). ATP is bound by residues Lys46, 53–55, Glu99, Thr102, and Glu107; that span reads GRG. Mg(2+) contacts are provided by Asn199 and Asp213. Residues Asn264 and 321-323 each bind substrate; that span reads GIV.

It belongs to the succinate/malate CoA ligase beta subunit family. Heterotetramer of two alpha and two beta subunits. The cofactor is Mg(2+).

The catalysed reaction is succinate + ATP + CoA = succinyl-CoA + ADP + phosphate. The enzyme catalyses GTP + succinate + CoA = succinyl-CoA + GDP + phosphate. It functions in the pathway carbohydrate metabolism; tricarboxylic acid cycle; succinate from succinyl-CoA (ligase route): step 1/1. In terms of biological role, succinyl-CoA synthetase functions in the citric acid cycle (TCA), coupling the hydrolysis of succinyl-CoA to the synthesis of either ATP or GTP and thus represents the only step of substrate-level phosphorylation in the TCA. The beta subunit provides nucleotide specificity of the enzyme and binds the substrate succinate, while the binding sites for coenzyme A and phosphate are found in the alpha subunit. This chain is Succinate--CoA ligase [ADP-forming] subunit beta, found in Shewanella loihica (strain ATCC BAA-1088 / PV-4).